Consider the following 316-residue polypeptide: MSIKEQTLMTPYLQFDRNQWAALRDSVPMTLSEDEIARLKGINEDLSLEEVAEIYLPLSRLLNFYISSNLRRQAVLEQFLGTNGQRIPYIISIAGSVAVGKSTTARVLQALLSRWPEHRRVELITTDGFLHPNQVLKERGLMKKKGFPESYDMHRLVKFVSDLKSGVPNVTAPVYSHLIYDVIPDGDKTVVQPDILILEGLNVLQSGMDYPHDPHHVFVSDFVDFSIYVDAPEDLLQTWYINRFLKFREGAFTDPDSYFHNYAKLTKEEAIKTAMTLWKEINWLNLKQNILPTRGRASLILTKSANHAVEEVRLRK.

95–102 (GSVAVGKS) lines the ATP pocket.

The protein belongs to the prokaryotic pantothenate kinase family.

The protein localises to the cytoplasm. It catalyses the reaction (R)-pantothenate + ATP = (R)-4'-phosphopantothenate + ADP + H(+). It functions in the pathway cofactor biosynthesis; coenzyme A biosynthesis; CoA from (R)-pantothenate: step 1/5. The polypeptide is Pantothenate kinase (Shigella dysenteriae serotype 1 (strain Sd197)).